The chain runs to 123 residues: Small ribosomal subunit protein uS12 (123 aa).

Aspartate 89 is modified (3-methylthioaspartic acid). Residues 102–123 (LDTQGVKDRKQGRSKYGAKRPK) are disordered. Residues 113 to 123 (GRSKYGAKRPK) are compositionally biased toward basic residues.

It belongs to the universal ribosomal protein uS12 family. In terms of assembly, part of the 30S ribosomal subunit. Contacts proteins S8 and S17. May interact with IF1 in the 30S initiation complex.

In terms of biological role, with S4 and S5 plays an important role in translational accuracy. Its function is as follows. Interacts with and stabilizes bases of the 16S rRNA that are involved in tRNA selection in the A site and with the mRNA backbone. Located at the interface of the 30S and 50S subunits, it traverses the body of the 30S subunit contacting proteins on the other side and probably holding the rRNA structure together. The combined cluster of proteins S8, S12 and S17 appears to hold together the shoulder and platform of the 30S subunit. In Magnetococcus marinus (strain ATCC BAA-1437 / JCM 17883 / MC-1), this protein is Small ribosomal subunit protein uS12.